We begin with the raw amino-acid sequence, 1661 residues long: Microtubule cross-linking factor 2 (1661 aa).

The interval 1–187 (MEAPAAEPPV…EPSVAASSVG (187 aa)) is disordered. Composition is skewed to low complexity over residues 76–94 (AVAP…VRTG) and 133–149 (LLGL…SAAG). A compositionally biased stretch (pro residues) spans 167–176 (QQPPRPPASP). A required for association with Golgi apparatus membrane region spans residues 211 to 240 (PSGLVRELEELRSENDYLKDEIEELRAEML). Coiled coils occupy residues 218–281 (LEEL…AERR) and 310–351 (SMRL…LQTE). The interval 353–373 (ERPREHSLKKRGTRSLGKADK) is disordered. 3 coiled-coil regions span residues 450-484 (LKLV…MKDH), 820-865 (IKEL…LKED), and 1083-1117 (SQEK…LQKA). S1169 carries the phosphoserine modification. The disordered stretch occupies residues 1196–1221 (AFGFVSSEPGDPEKDTKEKPGLSSRD). Over residues 1206-1215 (DPEKDTKEKP) the composition is skewed to basic and acidic residues. S1255 carries the post-translational modification Phosphoserine. Disordered regions lie at residues 1432-1456 (RPCC…DSSK), 1538-1563 (RAPS…ASYH), and 1636-1661 (HSPS…PPSE). Basic and acidic residues predominate over residues 1652 to 1661 (GEERALPPSE).

It belongs to the MTCL family. As to quaternary structure, interacts with CLASP1 and CLASP2. The C-terminal 25 kDa form occurs as a monomer. Proteolytically cleaved in primary hepatocytes into a C-terminal 80 kDa form. Proteolytically cleaved into a C-terminal SOGA 25 kDa form that is detected in plasma. Post-translationally, phosphorylated during mitosis in a CDK1-dependent manner.

The protein localises to the cytoplasm. It localises to the cytoskeleton. It is found in the golgi apparatus membrane. Its subcellular location is the midbody. The protein resides in the secreted. Its function is as follows. Microtubule-associated factor that enables integration of the centrosomal and Golgi-associated microtubules on the Golgi membrane, supporting directional migration. Preferentially acts on the perinuclear microtubules accumulated around the Golgi. Associates with the Golgi membrane through the N-terminal coiled-coil region and directly binds microtubules through the C-terminal domain. Required for faithful chromosome segregation during mitosis. Regulates autophagy by playing a role in the reduction of glucose production in an adiponectin- and insulin-dependent manner. This is Microtubule cross-linking factor 2 from Homo sapiens (Human).